The chain runs to 512 residues: ATP synthase subunit alpha (512 aa).

169 to 176 is an ATP binding site; that stretch reads GDRKTGKT.

It belongs to the ATPase alpha/beta chains family. As to quaternary structure, F-type ATPases have 2 components, CF(1) - the catalytic core - and CF(0) - the membrane proton channel. CF(1) has five subunits: alpha(3), beta(3), gamma(1), delta(1), epsilon(1). CF(0) has three main subunits: a(1), b(2) and c(9-12). The alpha and beta chains form an alternating ring which encloses part of the gamma chain. CF(1) is attached to CF(0) by a central stalk formed by the gamma and epsilon chains, while a peripheral stalk is formed by the delta and b chains.

It localises to the cell membrane. The enzyme catalyses ATP + H2O + 4 H(+)(in) = ADP + phosphate + 5 H(+)(out). Its function is as follows. Produces ATP from ADP in the presence of a proton gradient across the membrane. The alpha chain is a regulatory subunit. The polypeptide is ATP synthase subunit alpha (Limosilactobacillus fermentum (strain NBRC 3956 / LMG 18251) (Lactobacillus fermentum)).